The chain runs to 468 residues: Secretogranin-3 (468 aa).

Residues 1-19 (MGFLGTGTWILVLVLPIQA) form the signal peptide. A disordered region spans residues 23-69 (PGGSQDKSLHNRELSAERPLNEQIAEAEEDKIKKTYPPENKPGQSNY). Residues 29–42 (KSLHNRELSAERPL) show a composition bias toward basic and acidic residues. A Phosphoserine modification is found at serine 37. Serine 37 carries O-linked (Xyl...) (chondroitin sulfate) serine glycosylation. Threonine 216 and threonine 231 each carry an O-linked (GalNAc...) threonine glycan. The interval 353 to 406 (KLFPAPSEKSHEETDSTKEEAAKMEKEYGSLKDSTKDDNSNPGGKTDEPKGKTE) is disordered. O-linked (GalNAc...) serine glycosylation occurs at serine 359. Residues 360 to 406 (EKSHEETDSTKEEAAKMEKEYGSLKDSTKDDNSNPGGKTDEPKGKTE) show a composition bias toward basic and acidic residues. The residue at position 362 (serine 362) is a Phosphoserine.

In terms of assembly, interacts with CHGA. Interacts with secretogranin II/SCG2. Interacts (via C-terminus) with CPE. Post-translationally, O-glycosylated. In terms of tissue distribution, detected in urine (at protein level). Expressed in brain, heart, kidney, liver and skeletal muscle.

It localises to the cytoplasmic vesicle. Its subcellular location is the secretory vesicle. It is found in the secretory vesicle membrane. The protein resides in the secreted. Functionally, member of the granin protein family that regulates the biogenesis of secretory granules. Acts as a sorting receptor for intragranular proteins including chromogranin A/CHGA. May also play a role in angiogenesis. Promotes endothelial proliferation, migration and tube formation through MEK/ERK signaling pathway. The protein is Secretogranin-3 (SCG3) of Homo sapiens (Human).